A 326-amino-acid chain; its full sequence is Ribose operon repressor (326 aa).

The 56-residue stretch at 1–56 folds into the HTH lacI-type domain; it reads MATIKDVAGAAGVSVATVSRNLNDNGYVHEETRTRVIAAMAKLNYYPNEVARSLYK. Residues 4–23 constitute a DNA-binding region (H-T-H motif); sequence IKDVAGAAGVSVATVSRNLN.

Transcriptional repressor for the ribose rbsDACBK operon. This Bacillus subtilis (strain 168) protein is Ribose operon repressor (rbsR).